The primary structure comprises 299 residues: Oxygen-dependent coproporphyrinogen-III oxidase (299 aa).

Position 92 (Ser92) interacts with substrate. Mn(2+)-binding residues include His96 and His106. Residue His106 is the Proton donor of the active site. Asn108–Arg110 provides a ligand contact to substrate. Mn(2+) contacts are provided by His145 and His175. An important for dimerization region spans residues Tyr240–Glu275. Gly258–Arg260 contributes to the substrate binding site.

The protein belongs to the aerobic coproporphyrinogen-III oxidase family. Homodimer. Mn(2+) serves as cofactor.

The protein resides in the cytoplasm. It catalyses the reaction coproporphyrinogen III + O2 + 2 H(+) = protoporphyrinogen IX + 2 CO2 + 2 H2O. The protein operates within porphyrin-containing compound metabolism; protoporphyrin-IX biosynthesis; protoporphyrinogen-IX from coproporphyrinogen-III (O2 route): step 1/1. In terms of biological role, involved in the heme biosynthesis. Catalyzes the aerobic oxidative decarboxylation of propionate groups of rings A and B of coproporphyrinogen-III to yield the vinyl groups in protoporphyrinogen-IX. In Escherichia coli O8 (strain IAI1), this protein is Oxygen-dependent coproporphyrinogen-III oxidase.